We begin with the raw amino-acid sequence, 504 residues long: Maturase K (504 aa).

This sequence belongs to the intron maturase 2 family. MatK subfamily.

The protein resides in the plastid. Its subcellular location is the chloroplast. In terms of biological role, usually encoded in the trnK tRNA gene intron. Probably assists in splicing its own and other chloroplast group II introns. This chain is Maturase K, found in Nepenthes distillatoria (Pitcher plant).